Consider the following 120-residue polypeptide: NAD(P)H-quinone oxidoreductase subunit 3, chloroplastic (120 aa).

3 consecutive transmembrane segments (helical) span residues 9–29 (YFWLFLLLASLIPPVASPISS), 64–84 (MFASVFVISDAETVSLYPWAM), and 89–109 (LGVPASAEASISVTIPIVGSV).

This sequence belongs to the complex I subunit 3 family. NDH is composed of at least 16 different subunits, 5 of which are encoded in the nucleus.

The protein localises to the plastid. The protein resides in the chloroplast thylakoid membrane. The catalysed reaction is a plastoquinone + NADH + (n+1) H(+)(in) = a plastoquinol + NAD(+) + n H(+)(out). It carries out the reaction a plastoquinone + NADPH + (n+1) H(+)(in) = a plastoquinol + NADP(+) + n H(+)(out). In terms of biological role, NDH shuttles electrons from NAD(P)H:plastoquinone, via FMN and iron-sulfur (Fe-S) centers, to quinones in the photosynthetic chain and possibly in a chloroplast respiratory chain. The immediate electron acceptor for the enzyme in this species is believed to be plastoquinone. Couples the redox reaction to proton translocation, and thus conserves the redox energy in a proton gradient. The chain is NAD(P)H-quinone oxidoreductase subunit 3, chloroplastic from Huperzia lucidula (Shining clubmoss).